We begin with the raw amino-acid sequence, 464 residues long: Leucine-rich repeat-containing protein 34 (464 aa).

The interval 1-48 (MAAQPPRPVGERSMGSSREAARAPARSPAWASTQASTPGAALAVQRES) is disordered. Residues 16–32 (SSREAARAPARSPAWAS) show a composition bias toward low complexity. LRR repeat units follow at residues 295–315 (SLRYLDVSCNKITHDGMVYLA) and 323–345 (TLEVIDLSFNRIENAGANYLSET).

Interacts with NPM1 and NCL.

The protein resides in the nucleus. It is found in the nucleolus. It localises to the cytoplasm. In terms of biological role, highly expressed in stem cells where it may be involved in regulation of pluripotency. In embryonic stem cells (ESCs), important for normal expression of the pluripotency regulators POU5F1/OCT4 and KLF4. Also important for expression of the ectodermal marker gene NES and the endodermal marker gene GATA4. Promotes stem cell proliferation in vitro. The polypeptide is Leucine-rich repeat-containing protein 34 (LRRC34) (Homo sapiens (Human)).